We begin with the raw amino-acid sequence, 345 residues long: S-adenosylmethionine:tRNA ribosyltransferase-isomerase (345 aa).

Belongs to the QueA family. Monomer.

Its subcellular location is the cytoplasm. The catalysed reaction is 7-aminomethyl-7-carbaguanosine(34) in tRNA + S-adenosyl-L-methionine = epoxyqueuosine(34) in tRNA + adenine + L-methionine + 2 H(+). Its pathway is tRNA modification; tRNA-queuosine biosynthesis. Transfers and isomerizes the ribose moiety from AdoMet to the 7-aminomethyl group of 7-deazaguanine (preQ1-tRNA) to give epoxyqueuosine (oQ-tRNA). The sequence is that of S-adenosylmethionine:tRNA ribosyltransferase-isomerase from Anaeromyxobacter dehalogenans (strain 2CP-1 / ATCC BAA-258).